A 139-amino-acid chain; its full sequence is ATP synthase epsilon chain (139 aa).

The protein belongs to the ATPase epsilon chain family. In terms of assembly, F-type ATPases have 2 components, CF(1) - the catalytic core - and CF(0) - the membrane proton channel. CF(1) has five subunits: alpha(3), beta(3), gamma(1), delta(1), epsilon(1). CF(0) has three main subunits: a, b and c.

The protein localises to the cell membrane. Its function is as follows. Produces ATP from ADP in the presence of a proton gradient across the membrane. This Roseiflexus sp. (strain RS-1) protein is ATP synthase epsilon chain.